Here is a 272-residue protein sequence, read N- to C-terminus: Ethanolamine ammonia-lyase small subunit (272 aa).

3 residues coordinate adenosylcob(III)alamin: valine 161, glutamate 182, and cysteine 211.

The protein belongs to the EutC family. As to quaternary structure, the basic unit is a heterodimer which dimerizes to form tetramers. The heterotetramers trimerize; 6 large subunits form a core ring with 6 small subunits projecting outwards. The cofactor is adenosylcob(III)alamin.

Its subcellular location is the bacterial microcompartment. The enzyme catalyses ethanolamine = acetaldehyde + NH4(+). It functions in the pathway amine and polyamine degradation; ethanolamine degradation. Catalyzes the deamination of various vicinal amino-alcohols to oxo compounds. Allows this organism to utilize ethanolamine as the sole source of nitrogen and carbon in the presence of external vitamin B12. This is Ethanolamine ammonia-lyase small subunit from Pseudomonas putida (strain ATCC 700007 / DSM 6899 / JCM 31910 / BCRC 17059 / LMG 24140 / F1).